A 206-amino-acid chain; its full sequence is Thiamine-phosphate synthase (206 aa).

4-amino-2-methyl-5-(diphosphooxymethyl)pyrimidine-binding positions include 37–41 (QYRNK) and N69. Mg(2+) contacts are provided by D70 and D89. S108 provides a ligand contact to 4-amino-2-methyl-5-(diphosphooxymethyl)pyrimidine. 135–137 (SST) contacts 2-[(2R,5Z)-2-carboxy-4-methylthiazol-5(2H)-ylidene]ethyl phosphate. Position 138 (K138) interacts with 4-amino-2-methyl-5-(diphosphooxymethyl)pyrimidine. Residues G165 and 185-186 (IS) each bind 2-[(2R,5Z)-2-carboxy-4-methylthiazol-5(2H)-ylidene]ethyl phosphate.

Belongs to the thiamine-phosphate synthase family. Requires Mg(2+) as cofactor.

The enzyme catalyses 2-[(2R,5Z)-2-carboxy-4-methylthiazol-5(2H)-ylidene]ethyl phosphate + 4-amino-2-methyl-5-(diphosphooxymethyl)pyrimidine + 2 H(+) = thiamine phosphate + CO2 + diphosphate. It catalyses the reaction 2-(2-carboxy-4-methylthiazol-5-yl)ethyl phosphate + 4-amino-2-methyl-5-(diphosphooxymethyl)pyrimidine + 2 H(+) = thiamine phosphate + CO2 + diphosphate. It carries out the reaction 4-methyl-5-(2-phosphooxyethyl)-thiazole + 4-amino-2-methyl-5-(diphosphooxymethyl)pyrimidine + H(+) = thiamine phosphate + diphosphate. Its pathway is cofactor biosynthesis; thiamine diphosphate biosynthesis; thiamine phosphate from 4-amino-2-methyl-5-diphosphomethylpyrimidine and 4-methyl-5-(2-phosphoethyl)-thiazole: step 1/1. Functionally, condenses 4-methyl-5-(beta-hydroxyethyl)thiazole monophosphate (THZ-P) and 2-methyl-4-amino-5-hydroxymethyl pyrimidine pyrophosphate (HMP-PP) to form thiamine monophosphate (TMP). This is Thiamine-phosphate synthase from Azoarcus sp. (strain BH72).